The sequence spans 200 residues: MAQQRALPQSKETLLQSYNKRLKDDIKSIMDNFTEIIKTAKIEDETQVSRATQGEQDNYEMHVRAANIVRAGESLMKLVSDLKQFLILNDFPSVNEAIDQRNQQLRTLQEECDRKLITLRDEISIDLYELEEEYYSSSSSLCEANDLPLCEAYGRLDLDTDSADGLSAPLLASPEPSAGPLQVAAPAHSHAGGPGPTEHA.

A coiled-coil region spans residues 93–122 (SVNEAIDQRNQQLRTLQEECDRKLITLRDE). The segment at 166 to 200 (LSAPLLASPEPSAGPLQVAAPAHSHAGGPGPTEHA) is disordered.

Belongs to the Mediator complex subunit 22 family. In terms of assembly, component of the Mediator complex, which is composed of MED1, MED4, MED6, MED7, MED8, MED9, MED10, MED11, MED12, MED13, MED13L, MED14, MED15, MED16, MED17, MED18, MED19, MED20, MED21, MED22, MED23, MED24, MED25, MED26, MED27, MED29, MED30, MED31, CCNC, CDK8 and CDC2L6/CDK11. The MED12, MED13, CCNC and CDK8 subunits form a distinct module termed the CDK8 module. Mediator containing the CDK8 module is less active than Mediator lacking this module in supporting transcriptional activation. Individual preparations of the Mediator complex lacking one or more distinct subunits have been variously termed ARC, CRSP, DRIP, PC2, SMCC and TRAP.

The protein resides in the nucleus. Functionally, component of the Mediator complex, a coactivator involved in the regulated transcription of nearly all RNA polymerase II-dependent genes. Mediator functions as a bridge to convey information from gene-specific regulatory proteins to the basal RNA polymerase II transcription machinery. Mediator is recruited to promoters by direct interactions with regulatory proteins and serves as a scaffold for the assembly of a functional preinitiation complex with RNA polymerase II and the general transcription factors. This is Mediator of RNA polymerase II transcription subunit 22 (MED22) from Homo sapiens (Human).